Consider the following 313-residue polypeptide: Putative stilbene synthase 2 (313 aa).

Cys88 is a catalytic residue. Residues Leu191 and 229-231 (GGP) contribute to the substrate site.

Belongs to the thiolase-like superfamily. Chalcone/stilbene synthases family. In terms of assembly, homodimer.

The protein localises to the cytoplasm. The enzyme catalyses 4-coumaroyl-CoA + 3 malonyl-CoA + 3 H(+) = trans-resveratrol + 4 CO2 + 4 CoA. It functions in the pathway phytoalexin biosynthesis; 3,4',5-trihydroxystilbene biosynthesis; 3,4',5-trihydroxystilbene from trans-4-coumarate: step 2/2. The polypeptide is Putative stilbene synthase 2 (Arachis hypogaea (Peanut)).